Consider the following 75-residue polypeptide: MAERPLDVIHRSLDKDVLVILKKGFEFRGRLIGYDIHLNVVLADAEMIQDGEVVKRYGKIVIRGDNVLAISPTEE.

The Sm domain maps to 4–75 (RPLDVIHRSL…NVLAISPTEE (72 aa)).

Belongs to the snRNP Sm proteins family.

This chain is Putative snRNP Sm-like protein, found in Pyrococcus abyssi (strain GE5 / Orsay).